We begin with the raw amino-acid sequence, 262 residues long: Apolipoprotein A-Ia (262 aa).

The first 18 residues, 1 to 18 (MKFVALALTLLLALGSQA), serve as a signal peptide directing secretion. Residues 32 to 63 (YKAAALVYLNQVKDQAEKALDNLDGTDYEQYK) are 3 X approximate tandem repeats. Repeat copies occupy residues 64–85 (LQLS…QALT) and 87–107 (YAET…ERVM). Residues 64 to 262 (LQLSESLTKL…YETIAKAIQA (199 aa)) form a 10 X approximate tandem repeats region. A 3; half-length repeat occupies 108–118 (TDVEDLRSKLE). 5 repeat units span residues 119–140 (PHRA…EKLE), 141–162 (PVFQ…AKLE), 163–184 (PLMD…SKVV), 185–206 (PMVE…TMAA), and 207–228 (PYAE…EKIA). Residues 229 to 239 (PHTQDLQTRME) form a 9; half-length repeat. Copy 10 of the repeat occupies 240–262 (PYMENVRTTFAQMYETIAKAIQA).

The protein belongs to the apolipoprotein A1/A4/E family. Homodimer. Interacts with naxe and yjefn3.

It is found in the secreted. Functionally, participates in the reverse transport of cholesterol from tissues to the liver for excretion by promoting cholesterol efflux from tissues and by acting as a cofactor for the lecithin cholesterol acyltransferase (LCAT). The sequence is that of Apolipoprotein A-Ia from Danio rerio (Zebrafish).